A 269-amino-acid polypeptide reads, in one-letter code: MGKITAIKKLKRLYRVDLSDLDEEKIYLCEDTIIHFFITIDKEVSETDLEEILAYDQFAQGKSLALYYISFKMRTGAEVRKYLLEHDINDTDQIEQVLSVLTENNLINDKSYAENFIEGKISMGSSGPYQIKQKLLTKGISNDVLSETLNEIYSEEKQIDVAYKLASKLSRTYGTRLTLKQLKDKIIQNLMNKGFSYSVSSIALDSLELEADEENEMDLLYSELDKVAKRYTKNYEGYERKQKITQALARKGFLYDDISSALRDYTFPE.

Belongs to the RecX family.

It is found in the cytoplasm. In terms of biological role, modulates RecA activity. The chain is Regulatory protein RecX from Lactococcus lactis subsp. cremoris (strain MG1363).